The sequence spans 68 residues: UPF0253 protein VFMJ11_0680 (68 aa).

It belongs to the UPF0253 family.

This Aliivibrio fischeri (strain MJ11) (Vibrio fischeri) protein is UPF0253 protein VFMJ11_0680.